The primary structure comprises 392 residues: Iron-sulfur cluster assembly SufBD family protein ML0594 (392 aa).

The protein belongs to the iron-sulfur cluster assembly SufBD family.

This chain is Iron-sulfur cluster assembly SufBD family protein ML0594, found in Mycobacterium leprae (strain TN).